Here is a 644-residue protein sequence, read N- to C-terminus: Zinc finger protein 74 (644 aa).

The KRAB domain maps to 43-114; sequence VSFKDVAVDF…QREVPRGPCP (72 aa). 12 consecutive C2H2-type zinc fingers follow at residues 248-270, 276-298, 304-326, 332-354, 360-382, 388-410, 416-438, 444-466, 472-494, 500-522, 528-550, and 556-578; these read FVCGECGKAFRQSSSLTLHRRWH, YKCDECGKAFTWSTNLLEHRRIH, FFCGECGKAFSCHSSLNVHQRIH, YKCSACEKAFSCSSLLSMHLRVH, YRCGECGKAFNQRTHLTRHHRIH, YQCGSCGKAFTCHSSLTVHEKIH, FKCSDCEKAFNSRSRLTLHQRTH, FKCADCGKGFSCHAYLLVHRRIH, FKCNECGKAFSSHAYLIVHRRIH, FDCSQCWKAFSCHSSLIVHQRIH, YKCSECGRAFSQNHCLIKHQKIH, and FKCEKCGEMFNWSSHLTEHQRLH. Residue Lys582 forms a Glycyl lysine isopeptide (Lys-Gly) (interchain with G-Cter in SUMO2) linkage.

Belongs to the krueppel C2H2-type zinc-finger protein family. Highly expressed in the fetal brain.

It localises to the nucleus. Functionally, may play a role in RNA metabolism. This chain is Zinc finger protein 74 (ZNF74), found in Homo sapiens (Human).